The following is a 505-amino-acid chain: ATP synthase subunit beta (505 aa).

157-164 (GGAGVGKT) is a binding site for ATP.

It belongs to the ATPase alpha/beta chains family. As to quaternary structure, F-type ATPases have 2 components, CF(1) - the catalytic core - and CF(0) - the membrane proton channel. CF(1) has five subunits: alpha(3), beta(3), gamma(1), delta(1), epsilon(1). CF(0) has three main subunits: a(1), b(2) and c(9-12). The alpha and beta chains form an alternating ring which encloses part of the gamma chain. CF(1) is attached to CF(0) by a central stalk formed by the gamma and epsilon chains, while a peripheral stalk is formed by the delta and b chains.

Its subcellular location is the cell inner membrane. It carries out the reaction ATP + H2O + 4 H(+)(in) = ADP + phosphate + 5 H(+)(out). In terms of biological role, produces ATP from ADP in the presence of a proton gradient across the membrane. The catalytic sites are hosted primarily by the beta subunits. The sequence is that of ATP synthase subunit beta from Bacteroides thetaiotaomicron (strain ATCC 29148 / DSM 2079 / JCM 5827 / CCUG 10774 / NCTC 10582 / VPI-5482 / E50).